Reading from the N-terminus, the 1142-residue chain is Probable serine/threonine-protein kinase fhkB (1142 aa).

Residues 1–16 (MSQDIQTQNSYSDELY) are compositionally biased toward polar residues. 3 disordered regions span residues 1-359 (MSQD…RLSQ), 374-404 (NTHTNQLGQSSQQTNSPNVHFNSLQQKKKQQ), and 432-451 (QIIGSQSSQSSQLPPTQPPV). Composition is skewed to low complexity over residues 17–72 (SSQI…FSQN) and 83–157 (QNSY…PSSQ). Residues 158-178 (KRFFQSQNDDFVPSSQVTSLQ) are compositionally biased toward polar residues. Residues 186–302 (IQQQQQQQQQ…DYEQENDDDD (117 aa)) are a coiled coil. The span at 187–260 (QQQQQQQQQQ…QQTQQQQQQP (74 aa)) shows a compositional bias: low complexity. Acidic residues-rich tracts occupy residues 261–277 (QEDDDDYDDYDGYDNYE) and 283–325 (EGEE…EEES). Over residues 333-348 (RALQSRSSQSRPLLRS) the composition is skewed to low complexity. Positions 374-397 (NTHTNQLGQSSQQTNSPNVHFNSL) are enriched in polar residues. Positions 393–434 (HFNSLQQKKKQQQQQQQQQQQQQQQQQQQQQQQQQQQSQQII) form a coiled coil. Positions 432 to 443 (QIIGSQSSQSSQ) are enriched in low complexity. One can recognise an FHA domain in the interval 480–551 (IVVGRSSSCD…NGSYINGELI (72 aa)). The 261-residue stretch at 625 to 885 (YYFVKEIGSG…IKEALNHPWF (261 aa)) folds into the Protein kinase domain. ATP is bound by residues 631–639 (IGSGGYGIV) and lysine 654. The Proton acceptor role is filled by aspartate 747. The interval 947–1142 (FDNNNNNNNN…HQQYTQHTTM (196 aa)) is disordered. A compositionally biased stretch (low complexity) spans 949–1034 (NNNNNNNNNN…HNHNLNNHNH (86 aa)). Basic residues predominate over residues 1035–1067 (NNNHHHNHNHNHNHNHNHNHNHNHNHNHNHNHN). Over residues 1068 to 1133 (NHNNNNNNNN…NNINNNNNYH (66 aa)) the composition is skewed to low complexity. Residues 1090 to 1132 (NNNNNNNNNNNNNNNNNNNNYYNNNINNINNNINNNINNNNNY) adopt a coiled-coil conformation.

This sequence belongs to the protein kinase superfamily. CAMK Ser/Thr protein kinase family. CHK2 subfamily.

The enzyme catalyses L-seryl-[protein] + ATP = O-phospho-L-seryl-[protein] + ADP + H(+). It catalyses the reaction L-threonyl-[protein] + ATP = O-phospho-L-threonyl-[protein] + ADP + H(+). This Dictyostelium discoideum (Social amoeba) protein is Probable serine/threonine-protein kinase fhkB (fhkB).